Here is a 501-residue protein sequence, read N- to C-terminus: Putative BTB/POZ domain-containing protein L107 (501 aa).

The region spanning 16-87 (TDLELTLVDS…FYITDIERSQ (72 aa)) is the BTB domain.

The protein belongs to the mimivirus BTB/WD family.

The sequence is that of Putative BTB/POZ domain-containing protein L107 from Acanthamoeba polyphaga mimivirus (APMV).